A 131-amino-acid polypeptide reads, in one-letter code: Bypass of stop codon protein 4 (131 aa).

In Saccharomyces cerevisiae (strain ATCC 204508 / S288c) (Baker's yeast), this protein is Bypass of stop codon protein 4 (BSC4).